Reading from the N-terminus, the 60-residue chain is Large ribosomal subunit protein bL32B (60 aa).

Residues 1–19 (MAVPKRKMSRANTRHRRSQ) are compositionally biased toward basic residues. A disordered region spans residues 1-20 (MAVPKRKMSRANTRHRRSQW).

It belongs to the bacterial ribosomal protein bL32 family.

The polypeptide is Large ribosomal subunit protein bL32B (Saccharopolyspora erythraea (strain ATCC 11635 / DSM 40517 / JCM 4748 / NBRC 13426 / NCIMB 8594 / NRRL 2338)).